Consider the following 126-residue polypeptide: Glycine cleavage system H protein (126 aa).

In terms of domain architecture, Lipoyl-binding spans 22–104 (KLRIGITDFA…YEKAWMIVIE (83 aa)). Lys63 bears the N6-lipoyllysine mark.

This sequence belongs to the GcvH family. As to quaternary structure, the glycine cleavage system is composed of four proteins: P, T, L and H. The cofactor is (R)-lipoate.

Its function is as follows. The glycine cleavage system catalyzes the degradation of glycine. The H protein shuttles the methylamine group of glycine from the P protein to the T protein. Is also involved in protein lipoylation via its role as an octanoyl/lipoyl carrier protein intermediate. This is Glycine cleavage system H protein from Oceanobacillus iheyensis (strain DSM 14371 / CIP 107618 / JCM 11309 / KCTC 3954 / HTE831).